Reading from the N-terminus, the 364-residue chain is FK506-binding protein 4 (364 aa).

Disordered regions lie at residues 92–148 and 168–239; these read SMFG…DDEI and EADK…PTKP. Acidic residues predominate over residues 94-148; that stretch reads FGDDEHGEDEDNEEEEGEEGEDEEMEGEDEDEDEEDEDEEDEDEEEEDDEEDDEI. Positions 168 to 184 are enriched in basic and acidic residues; it reads EADKNKQQKKPKQEEPV. The segment covering 185–239 has biased composition (low complexity); that stretch reads KQVTPVKPTAQAAKPTAATTTTTTTTTTTPTKQTTPAKPAAKPVTPTKPVTPTKP. One can recognise a PPIase FKBP-type domain in the interval 277-363; it reads GKKVGVKYIG…IFDVELVSCA (87 aa).

The protein belongs to the FKBP-type PPIase family. As to quaternary structure, binds to histones H3 and H4.

It localises to the nucleus. The catalysed reaction is [protein]-peptidylproline (omega=180) = [protein]-peptidylproline (omega=0). With respect to regulation, inhibited by both FK506 and rapamycin. Its function is as follows. PPIase that acts as a histone chaperone. Histone proline isomerase that increases the rate of cis-trans isomerization at prolines on the histone H3 N-terminal tail. Proline isomerization influences H3 methylation thereby regulating gene expression. The protein is FK506-binding protein 4 (fkbp4) of Dictyostelium discoideum (Social amoeba).